The following is a 411-amino-acid chain: Protein phosphatase 1 regulatory subunit 36 (411 aa).

As to quaternary structure, interacts with PPP1CA.

Its function is as follows. Inhibits phosphatase activity of protein phosphatase 1 (PP1) complexes. This chain is Protein phosphatase 1 regulatory subunit 36 (Ppp1r36), found in Rattus norvegicus (Rat).